The sequence spans 409 residues: Probable beta-1,3-galactosyltransferase 3 (409 aa).

A helical; Signal-anchor for type II membrane protein membrane pass occupies residues 20–42 (WTFLLCFGSFCFGILFTDRMWII).

This sequence belongs to the glycosyltransferase 31 family. Mn(2+) serves as cofactor.

The protein resides in the golgi apparatus membrane. Its pathway is protein modification; protein glycosylation. In terms of biological role, beta-1,3-galactosyltransferase that transfers galactose from UDP-galactose to substrates with a terminal glycosyl residue. The chain is Probable beta-1,3-galactosyltransferase 3 (B3GALT3) from Arabidopsis thaliana (Mouse-ear cress).